The primary structure comprises 86 residues: Synergistic-like venom protein (86 aa).

The signal sequence occupies residues 1–21 (MKTLLLTLVVVTIVCLDLGYT). 4 disulfides stabilise this stretch: Cys-24-Cys-45, Cys-38-Cys-63, Cys-67-Cys-78, and Cys-79-Cys-84.

The protein belongs to the three-finger toxin family. Short-chain subfamily. Aminergic toxin sub-subfamily. In terms of tissue distribution, expressed by the venom gland.

The protein resides in the secreted. This Dendroaspis angusticeps (Eastern green mamba) protein is Synergistic-like venom protein.